Consider the following 334-residue polypeptide: Putative fatty acid elongase 1 (334 aa).

Topologically, residues 1-51 (MDLTGAHMLKIHRPSIDHPFGVDLWHLFEQLSIKTIGWNPSEFEYIPGKTP) are lumenal. Residues 52-72 (MSQWSSVIVSITAYYVIILSG) traverse the membrane as a helical segment. Over 73–86 (RAIMTNRKPLKQRR) the chain is Cytoplasmic. A helical membrane pass occupies residues 87 to 107 (LFQLHNFILTIISGALLALLV). The Lumenal portion of the chain corresponds to 108–135 (EEVFRNYMRNGLFYCVCDSRHFTQRLVT). The helical transmembrane segment at 136-156 (LYYLNYLTKYLELMDTVFLFL) threads the bilayer. The Cytoplasmic segment spans residues 157 to 160 (KKKP). The helical transmembrane segment at 161–181 (LAFLHCYHHGITALLCFTQLL) threads the bilayer. The Lumenal portion of the chain corresponds to 182–187 (GRTSVQ). The helical transmembrane segment at 188–208 (WGVIGLNLYVHVIMYSYYFLA) threads the bilayer. The Cytoplasmic segment spans residues 209-224 (ACGRRVWWKQWVTRVQ). The helical transmembrane segment at 225-245 (IIQFVLDLILCYFGTYSHIAF) threads the bilayer. At 246–260 (RYFPWLPHVGDCSGS) the chain is on the lumenal side. The helical transmembrane segment at 261–281 (LFAAFFGCGVLSSYLFLFIGF) threads the bilayer. At 282 to 334 (YINTYIKRGAKKNQRKAAGKADNTSVAAAAGSEALAATTATNASPFSARSRKL) the chain is on the cytoplasmic side. Ser325 bears the Phosphoserine mark.

This sequence belongs to the ELO family.

It is found in the endoplasmic reticulum membrane. It carries out the reaction a very-long-chain acyl-CoA + malonyl-CoA + H(+) = a very-long-chain 3-oxoacyl-CoA + CO2 + CoA. Functionally, may be involved in the synthesis of very long chain fatty acids. The protein is Putative fatty acid elongase 1 of Schizosaccharomyces pombe (strain 972 / ATCC 24843) (Fission yeast).